The sequence spans 224 residues: Synaptogyrin-2 (224 aa).

Residue Met1 is modified to N-acetylmethionine. At Ser3 the chain carries Phosphoserine. An MARVEL domain is found at 20-171 (FLKQPQVVVR…LAFLAYQRYK (152 aa)). A run of 4 helical transmembrane segments spans residues 26–46 (VVVR…IFGE), 73–93 (AIGV…IYFP), 105–125 (VIGD…GFCF), and 147–167 (AAIT…FLAY). The disordered stretch occupies residues 196 to 224 (PGVPADTYQQPPFTQNAESTEGYQPPPVY). Over residues 202-217 (TYQQPPFTQNAESTEG) the composition is skewed to polar residues.

It belongs to the synaptogyrin family. May be tyrosine phosphorylated by Src.

It localises to the cytoplasmic vesicle membrane. The protein localises to the cytoplasmic vesicle. Its subcellular location is the secretory vesicle. The protein resides in the synaptic vesicle membrane. May play a role in regulated exocytosis. In neuronal cells, modulates the localization of synaptophysin/SYP into synaptic-like microvesicles and may therefore play a role in the formation and/or the maturation of this vesicles. May also play a role in GLUT4 storage and transport to the plasma membrane. The chain is Synaptogyrin-2 from Bos taurus (Bovine).